Here is a 408-residue protein sequence, read N- to C-terminus: Na(+)-translocating NADH-quinone reductase subunit F (408 aa).

A helical membrane pass occupies residues 6-26 (IILGVVMFTAIVLALVAIILA). Residues 35 to 127 (GDVTIRINGE…DMDVEVPEEV (93 aa)) form the 2Fe-2S ferredoxin-type domain. Residues Cys70, Cys76, Cys79, and Cys111 each coordinate [2Fe-2S] cluster. The FAD-binding FR-type domain maps to 130 to 270 (VKAWECTVES…YGPFGEFFAK (141 aa)).

It belongs to the NqrF family. Composed of six subunits; NqrA, NqrB, NqrC, NqrD, NqrE and NqrF. It depends on [2Fe-2S] cluster as a cofactor. FAD serves as cofactor.

It localises to the cell inner membrane. The catalysed reaction is a ubiquinone + n Na(+)(in) + NADH + H(+) = a ubiquinol + n Na(+)(out) + NAD(+). Its function is as follows. NQR complex catalyzes the reduction of ubiquinone-1 to ubiquinol by two successive reactions, coupled with the transport of Na(+) ions from the cytoplasm to the periplasm. The first step is catalyzed by NqrF, which accepts electrons from NADH and reduces ubiquinone-1 to ubisemiquinone by a one-electron transfer pathway. This Marinomonas sp. (strain MWYL1) protein is Na(+)-translocating NADH-quinone reductase subunit F.